The sequence spans 120 residues: Putative ferric transport system permease-like protein AfuB (120 aa).

Residues 1 to 38 (MESLPGQIDKSLDEASLSLRAGSLRTITHILLPLLRPA) are Cytoplasmic-facing. Positions 1–102 (MESLPGQIDK…VVMLAIIFIF (102 aa)) constitute an ABC transmembrane type-1 domain. A helical transmembrane segment spans residues 39–59 (ILSALIYSFVRAITTVSAIVF). Residues 60–81 (LVTPDTRVATAYILNRVEDGEY) lie on the Periplasmic side of the membrane. Residues 82-102 (GVAIAYGSILIVVMLAIIFIF) traverse the membrane as a helical segment. Residues 103 to 120 (DWLIGESRTSRSKAKNQA) are Cytoplasmic-facing.

The protein belongs to the binding-protein-dependent transport system permease family. FbpB subfamily.

The protein localises to the cell inner membrane. A severely truncated paralog of the AfuB uptake protein, homologous only to the last 20% of the intact protein in Actinobacillus. This Escherichia coli (strain K12) protein is Putative ferric transport system permease-like protein AfuB (afuB).